We begin with the raw amino-acid sequence, 318 residues long: Ethylene-responsive transcription factor FZP (318 aa).

A compositionally biased stretch (low complexity) spans 1–15; it reads MNTRGSGSSSSSSSS. Disordered stretches follow at residues 1–59 and 158–178; these read MNTR…GRFL and SYGH…SGAS. Positions 25-37 are enriched in pro residues; that stretch reads PPKPASQPSPPSS. The segment at residues 57-114 is a DNA-binding region (AP2/ERF); sequence RFLGVRRRPWGRYAAEIRDPTTKERHWLGTFDTAQEAALAYDRAALSMKGAQARTNFV. Residues 160-171 show a composition bias toward basic residues; it reads GHHHHHHHHHGH.

It belongs to the AP2/ERF transcription factor family. ERF subfamily.

The protein localises to the nucleus. Functionally, required to prevent the formation of axillary meristems within the spikelet meristem and permit the subsequent establishment of floral meristem identity. Mediates the transition from spikelet to floret meristem. Determines the transition from panicle branching to spikelet formation. May specify floral organ identity by regulating the class B genes (Agamous-like genes) MADS6 and MADS17, as well as class E genes MADS1, MADS7 and MADS8 in floral meristem. Possesses transactivation activity. The protein is Ethylene-responsive transcription factor FZP of Oryza sativa subsp. japonica (Rice).